Here is a 332-residue protein sequence, read N- to C-terminus: Anthranilate phosphoribosyltransferase (332 aa).

5-phospho-alpha-D-ribose 1-diphosphate-binding positions include Gly-79, Gly-82–Asp-83, Ser-87, Asn-89–Thr-92, Lys-107–Ser-115, and Ser-119. Residue Gly-79 coordinates anthranilate. Ser-91 provides a ligand contact to Mg(2+). Asn-110 is an anthranilate binding site. An anthranilate-binding site is contributed by Arg-165. 2 residues coordinate Mg(2+): Asp-223 and Glu-224.

The protein belongs to the anthranilate phosphoribosyltransferase family. In terms of assembly, homodimer. The cofactor is Mg(2+).

The enzyme catalyses N-(5-phospho-beta-D-ribosyl)anthranilate + diphosphate = 5-phospho-alpha-D-ribose 1-diphosphate + anthranilate. The protein operates within amino-acid biosynthesis; L-tryptophan biosynthesis; L-tryptophan from chorismate: step 2/5. Catalyzes the transfer of the phosphoribosyl group of 5-phosphorylribose-1-pyrophosphate (PRPP) to anthranilate to yield N-(5'-phosphoribosyl)-anthranilate (PRA). The protein is Anthranilate phosphoribosyltransferase of Yersinia pseudotuberculosis serotype O:3 (strain YPIII).